The primary structure comprises 1555 residues: UDP-glucose:glycoprotein glucosyltransferase 1 (1555 aa).

Positions 1–42 (MGCKGDASGACAAGALPVTGVCYKMGVLVVLTVLWLFSSVKA) are cleaved as a signal peptide. N-linked (GlcNAc...) asparagine glycosylation is found at N536 and N1228. The glucosyltransferase stretch occupies residues 1244–1555 (KTEEVKQDKD…REGPQKREEL (312 aa)). Residue S1277 is modified to Phosphoserine. The tract at residues 1534-1555 (GALYKEKTKEPSREGPQKREEL) is disordered. The Prevents secretion from ER signature appears at 1552–1555 (REEL).

The protein belongs to the glycosyltransferase 8 family. In terms of assembly, monomer as well as in a tight complex with SELENOF. Interacts with METTL23. Part of a large chaperone multiprotein complex comprising DNAJB11, HSP90B1, HSPA5, HYOU, PDIA2, PDIA4, PDIA6, PPIB, SDF2L1, UGGT1 and very small amounts of ERP29, but not, or at very low levels, CALR nor CANX. The cofactor is Ca(2+). Requires Mn(2+) as cofactor. As to expression, higher levels in pancreas, skeletal muscle, kidney, and brain. Low levels in lung and heart.

The protein resides in the endoplasmic reticulum lumen. Its subcellular location is the endoplasmic reticulum-Golgi intermediate compartment. It carries out the reaction N(4)-(alpha-D-Man-(1-&gt;2)-alpha-D-Man-(1-&gt;2)-alpha-D-Man-(1-&gt;3)-[alpha-D-Man-(1-&gt;2)-alpha-D-Man-(1-&gt;3)-[alpha-D-Man-(1-&gt;2)-alpha-D-Man-(1-&gt;6)]-alpha-D-Man-(1-&gt;6)]-beta-D-Man-(1-&gt;4)-beta-D-GlcNAc-(1-&gt;4)-beta-D-GlcNAc)-L-asparaginyl-[protein] (N-glucan mannose isomer 9A1,2,3B1,2,3) + UDP-alpha-D-glucose = N(4)-(alpha-D-Glc-(1-&gt;3)-alpha-D-Man-(1-&gt;2)-alpha-D-Man-(1-&gt;2)-alpha-D-Man-(1-&gt;3)-[alpha-D-Man-(1-&gt;2)-alpha-D-Man-(1-&gt;3)-[alpha-D-Man-(1-&gt;2)-alpha-D-Man-(1-&gt;6)]-alpha-D-Man-(1-&gt;6)]-beta-D-Man-(1-&gt;4)-beta-D-GlcNAc-(1-&gt;4)-beta-D-GlcNAc)-L-asparaginyl-[protein] + UDP + H(+). It participates in protein modification; protein glycosylation. With respect to regulation, catalytic activity is enhanced by complex formation with SELENOF. In terms of biological role, recognizes glycoproteins with minor folding defects. Reglucosylates single N-glycans near the misfolded part of the protein, thus providing quality control for protein folding in the endoplasmic reticulum. Reglucosylated proteins are recognized by calreticulin for recycling to the endoplasmic reticulum and refolding or degradation. In Homo sapiens (Human), this protein is UDP-glucose:glycoprotein glucosyltransferase 1 (UGGT1).